The sequence spans 325 residues: Elongation factor P--(R)-beta-lysine ligase (325 aa).

Residue Ser76 to Glu78 coordinates substrate. Residues Arg100–Glu102 and Asn109 contribute to the ATP site. Tyr118 lines the substrate pocket. Residue Glu244–Leu245 coordinates ATP. Glu251 is a binding site for substrate. Gly300 is an ATP binding site.

This sequence belongs to the class-II aminoacyl-tRNA synthetase family. EpmA subfamily. In terms of assembly, homodimer.

It catalyses the reaction D-beta-lysine + L-lysyl-[protein] + ATP = N(6)-((3R)-3,6-diaminohexanoyl)-L-lysyl-[protein] + AMP + diphosphate + H(+). With EpmB is involved in the beta-lysylation step of the post-translational modification of translation elongation factor P (EF-P) on 'Lys-34'. Catalyzes the ATP-dependent activation of (R)-beta-lysine produced by EpmB, forming a lysyl-adenylate, from which the beta-lysyl moiety is then transferred to the epsilon-amino group of EF-P 'Lys-34'. The sequence is that of Elongation factor P--(R)-beta-lysine ligase from Salmonella arizonae (strain ATCC BAA-731 / CDC346-86 / RSK2980).